Reading from the N-terminus, the 383-residue chain is Glucose-1-phosphate adenylyltransferase (383 aa).

Residues Tyr-100, Gly-165, 180-181 (EK), and Ser-191 contribute to the alpha-D-glucose 1-phosphate site.

The protein belongs to the bacterial/plant glucose-1-phosphate adenylyltransferase family. As to quaternary structure, homotetramer.

It carries out the reaction alpha-D-glucose 1-phosphate + ATP + H(+) = ADP-alpha-D-glucose + diphosphate. It participates in glycan biosynthesis; glycogen biosynthesis. Functionally, involved in the biosynthesis of ADP-glucose, a building block required for the elongation reactions to produce glycogen. Catalyzes the reaction between ATP and alpha-D-glucose 1-phosphate (G1P) to produce pyrophosphate and ADP-Glc. The sequence is that of Glucose-1-phosphate adenylyltransferase from Clostridium kluyveri (strain ATCC 8527 / DSM 555 / NBRC 12016 / NCIMB 10680 / K1).